We begin with the raw amino-acid sequence, 278 residues long: Large ribosomal subunit protein uL2c (278 aa).

The tract at residues Gly-222–Ile-241 is disordered.

The protein belongs to the universal ribosomal protein uL2 family. In terms of assembly, part of the 50S ribosomal subunit.

It localises to the plastid. The protein resides in the chloroplast. This chain is Large ribosomal subunit protein uL2c (rpl2), found in Tupiella akineta (Green alga).